The sequence spans 856 residues: Leucine--tRNA ligase (856 aa).

The short motif at 53 to 63 (PYPSGNLHMGH) is the 'HIGH' region element. The 'KMSKS' region motif lies at 622-626 (KMSKS). ATP is bound at residue Lys-625.

The protein belongs to the class-I aminoacyl-tRNA synthetase family.

The protein resides in the cytoplasm. It carries out the reaction tRNA(Leu) + L-leucine + ATP = L-leucyl-tRNA(Leu) + AMP + diphosphate. This chain is Leucine--tRNA ligase, found in Prochlorococcus marinus (strain MIT 9301).